Consider the following 347-residue polypeptide: Quinolinate synthase (347 aa).

The iminosuccinate site is built by His-47 and Ser-68. Cys-113 serves as a coordination point for [4Fe-4S] cluster. Iminosuccinate is bound by residues 139 to 141 (YAN) and Ser-156. Cys-200 lines the [4Fe-4S] cluster pocket. Iminosuccinate contacts are provided by residues 226 to 228 (HPE) and Thr-243. Residue Cys-297 participates in [4Fe-4S] cluster binding.

The protein belongs to the quinolinate synthase family. Type 1 subfamily. It depends on [4Fe-4S] cluster as a cofactor.

The protein localises to the cytoplasm. The catalysed reaction is iminosuccinate + dihydroxyacetone phosphate = quinolinate + phosphate + 2 H2O + H(+). Its pathway is cofactor biosynthesis; NAD(+) biosynthesis; quinolinate from iminoaspartate: step 1/1. Catalyzes the condensation of iminoaspartate with dihydroxyacetone phosphate to form quinolinate. In Shigella flexneri serotype 5b (strain 8401), this protein is Quinolinate synthase.